We begin with the raw amino-acid sequence, 182 residues long: Malignant T-cell-amplified sequence 1 homolog (182 aa).

Positions 93–172 (VTMQQVDKGA…IGIETYHFLN (80 aa)) constitute a PUA domain.

The protein belongs to the MCTS1 family. As to quaternary structure, interacts with DENR.

It is found in the cytoplasm. Regulates translation as part of a complex with DENR. Specifically required for translational re-initiation in mRNAs containing upstream open reading frames (uORFs). Not required for standard translational initiation. Regulates expression of a subset of gene products including mbc, InR and EcR. This is Malignant T-cell-amplified sequence 1 homolog from Drosophila melanogaster (Fruit fly).